Here is a 254-residue protein sequence, read N- to C-terminus: MLLAIDVGNTNTTLGVYDGAVLRRHWRVETSHTRTYDEYGILLRQLFASAGLEPARVSAVVIASVVPPLAFTLEQMCVRYFDRKPMFVGPGMKTGMPILYENPREVGADRVVNAVAAYERWRCALVVVDFGTATTFDVISAKGEYLGGAICPGIGISMDALARSASKLPRVEFAKPPSVVGKNTVASIQAGLVYGYVGMVDGICAQIAAELATPPKVVATGGLAPLIAGVSRSITEVDEHLTLEGLRILHERNR.

6–13 contacts ATP; the sequence is DVGNTNTT. Substrate-binding positions include Y100 and 107 to 110; that span reads GADR. D109 functions as the Proton acceptor in the catalytic mechanism. D129 contributes to the K(+) binding site. T132 is an ATP binding site. Substrate is bound at residue T184.

Belongs to the type III pantothenate kinase family. In terms of assembly, homodimer. NH4(+) serves as cofactor. K(+) is required as a cofactor.

Its subcellular location is the cytoplasm. The enzyme catalyses (R)-pantothenate + ATP = (R)-4'-phosphopantothenate + ADP + H(+). Its pathway is cofactor biosynthesis; coenzyme A biosynthesis; CoA from (R)-pantothenate: step 1/5. Its function is as follows. Catalyzes the phosphorylation of pantothenate (Pan), the first step in CoA biosynthesis. This is Type III pantothenate kinase from Anaeromyxobacter dehalogenans (strain 2CP-1 / ATCC BAA-258).